A 172-amino-acid polypeptide reads, in one-letter code: Interferon tau-3 (172 aa).

Cystine bridges form between C1/C99 and C29/C139. N78 carries an N-linked (GlcNAc...) asparagine glycan.

The protein belongs to the alpha/beta interferon family. IFN-alphaII subfamily. Constitutively and exclusively expressed in the mononuclear cells of the extraembryonic trophectoderm.

It is found in the secreted. In terms of biological role, paracrine hormone primarily responsible for maternal recognition of pregnancy. Interacts with endometrial receptors, probably type I interferon receptors, and blocks estrogen receptor expression, preventing the estrogen-induced increase in oxytocin receptor expression in the endometrium. This results in the suppression of the pulsatile endometrial release of the luteolytic hormone prostaglandin F2-alpha, hindering the regression of the corpus luteum (luteolysis) and therefore a return to ovarian cyclicity. This, and a possible direct effect of IFN-tau on prostaglandin synthesis, leads in turn to continued ovarian progesterone secretion, which stimulates the secretion by the endometrium of the nutrients required for the growth of the conceptus. In summary, displays particularly high antiviral and antiproliferative potency concurrently with particular weak cytotoxicity, high antiluteolytic activity and immunomodulatory properties. In contrast with other IFNs, IFN-tau is not virally inducible. This Bos taurus (Bovine) protein is Interferon tau-3 (IFNT3).